Consider the following 300-residue polypeptide: Phosphoenolpyruvate phosphomutase (300 aa).

Positions 1–10 (MLANSLKSFF) are excised as a propeptide. Residue aspartate 66 is the Nucleophile of the active site.

This sequence belongs to the isocitrate lyase/PEP mutase superfamily. PEP mutase family.

The catalysed reaction is phosphoenolpyruvate + H(+) = 3-phosphonopyruvate. Its pathway is phosphorus metabolism; phosphonate biosynthesis. In terms of biological role, formation of a carbon-phosphorus bond by converting phosphoenolpyruvate (PEP) to phosphonopyruvate (P-Pyr). The protein is Phosphoenolpyruvate phosphomutase (PEPM) of Tetrahymena pyriformis.